Here is a 1320-residue protein sequence, read N- to C-terminus: Tetratricopeptide repeat protein 21A (1320 aa).

19 TPR repeats span residues 4-38 (NDSS…FSND), 110-143 (GTAL…SRGF), 146-180 (AYVL…TKDV), 181-213 (LGLM…SGSF), 215-247 (PALV…DESN), 334-367 (VHVA…DKDG), 502-534 (IDPL…DPAS), 572-605 (PLYH…PALK), 728-761 (PHTS…NPHD), 762-795 (ASLA…NGQD), 797-828 (LCCD…DIVQ), 837-869 (VKCL…QSRI), 889-922 (ASIC…LPTD), 924-956 (KVML…EQNH), 957-990 (ETAS…APDN), 1028-1061 (PGFN…STWG), 1201-1234 (EKSW…NKSC), 1236-1268 (KAYE…SHHA), and 1270-1303 (PAIG…HPDY).

This sequence belongs to the TTC21 family. As to quaternary structure, interacts with IFT20. Interacts with IFT52. Interacts with IFT140. Interacts with CEP78; regulating IFT20 stability and localization. In terms of tissue distribution, strongly expressed in testis.

In terms of biological role, intraflagellar transport (IFT)-associated protein required for spermatogenesis. Required for sperm flagellar formation and intraflagellar transport. The protein is Tetratricopeptide repeat protein 21A of Homo sapiens (Human).